The sequence spans 410 residues: Tryptophan synthase beta chain (410 aa).

K99 carries the N6-(pyridoxal phosphate)lysine modification.

This sequence belongs to the TrpB family. Tetramer of two alpha and two beta chains. It depends on pyridoxal 5'-phosphate as a cofactor.

The enzyme catalyses (1S,2R)-1-C-(indol-3-yl)glycerol 3-phosphate + L-serine = D-glyceraldehyde 3-phosphate + L-tryptophan + H2O. It participates in amino-acid biosynthesis; L-tryptophan biosynthesis; L-tryptophan from chorismate: step 5/5. Functionally, the beta subunit is responsible for the synthesis of L-tryptophan from indole and L-serine. This Pseudomonas fluorescens (strain Pf0-1) protein is Tryptophan synthase beta chain.